A 229-amino-acid chain; its full sequence is Response regulator SaeR (229 aa).

The 114-residue stretch at 3 to 116 folds into the Response regulatory domain; sequence HLLIVDDEKD…ELVLRTNNLL (114 aa). Asp51 bears the 4-aspartylphosphate mark. The ompR/PhoB-type DNA-binding region spans 128-227; the sequence is IEQLEFDGLV…VWGLGYKFER (100 aa).

Phosphorylated by SaeS.

Its subcellular location is the cytoplasm. Its function is as follows. Member of the two-component regulatory system SaeR/SaeS. Probably functions as a transcriptional regulator via a specific DNA-binding domain, recognizing motifs near the promoter sequences of target genes. This is Response regulator SaeR (saeR) from Staphylococcus epidermidis (strain ATCC 35984 / DSM 28319 / BCRC 17069 / CCUG 31568 / BM 3577 / RP62A).